The primary structure comprises 631 residues: 1-deoxy-D-xylulose-5-phosphate synthase (631 aa).

Residues H73 and 114-116 (SHA) each bind thiamine diphosphate. D145 contributes to the Mg(2+) binding site. Thiamine diphosphate contacts are provided by residues 146–147 (GA), N175, Y286, and E368. N175 serves as a coordination point for Mg(2+).

It belongs to the transketolase family. DXPS subfamily. Homodimer. Requires Mg(2+) as cofactor. Thiamine diphosphate is required as a cofactor.

The enzyme catalyses D-glyceraldehyde 3-phosphate + pyruvate + H(+) = 1-deoxy-D-xylulose 5-phosphate + CO2. Its pathway is metabolic intermediate biosynthesis; 1-deoxy-D-xylulose 5-phosphate biosynthesis; 1-deoxy-D-xylulose 5-phosphate from D-glyceraldehyde 3-phosphate and pyruvate: step 1/1. In terms of biological role, catalyzes the acyloin condensation reaction between C atoms 2 and 3 of pyruvate and glyceraldehyde 3-phosphate to yield 1-deoxy-D-xylulose-5-phosphate (DXP). This Nocardia farcinica (strain IFM 10152) protein is 1-deoxy-D-xylulose-5-phosphate synthase.